Reading from the N-terminus, the 408-residue chain is Succinylornithine transaminase (408 aa).

Residue Lys-252 is modified to N6-(pyridoxal phosphate)lysine.

The protein belongs to the class-III pyridoxal-phosphate-dependent aminotransferase family. AstC subfamily. Pyridoxal 5'-phosphate serves as cofactor.

It carries out the reaction N(2)-succinyl-L-ornithine + 2-oxoglutarate = N-succinyl-L-glutamate 5-semialdehyde + L-glutamate. The protein operates within amino-acid degradation; L-arginine degradation via AST pathway; L-glutamate and succinate from L-arginine: step 3/5. Catalyzes the transamination of N(2)-succinylornithine and alpha-ketoglutarate into N(2)-succinylglutamate semialdehyde and glutamate. Can also act as an acetylornithine aminotransferase. In Salmonella newport (strain SL254), this protein is Succinylornithine transaminase.